The following is a 579-amino-acid chain: Tetratricopeptide repeat protein 39C (579 aa).

Residues 182 to 197 (QQGALASDQANHNTST) are compositionally biased toward polar residues. The interval 182-202 (QQGALASDQANHNTSTGSGGR) is disordered. TPR repeat units lie at residues 311-344 (SLFI…ASDQ), 349-382 (HVCL…SRWS), and 481-514 (GLKH…EYGR).

Belongs to the TTC39 family.

This Danio rerio (Zebrafish) protein is Tetratricopeptide repeat protein 39C (ttc39c).